We begin with the raw amino-acid sequence, 384 residues long: Toluene efflux pump periplasmic linker protein TtgA (384 aa).

An N-terminal signal peptide occupies residues 1–22; that stretch reads MQFKPAVTALVSAVALATLLSG. The N-palmitoyl cysteine moiety is linked to residue cysteine 23. Cysteine 23 carries the S-diacylglycerol cysteine lipid modification. Residues 115–155 adopt a coiled-coil conformation; that stretch reads LAERYKQLIDEQAVSKQEYDDANAKRLQAEASLKSAQIDLR. The segment at 362-384 is disordered; it reads ATNVKKPAGPDQANAAKADAKAE. The segment covering 368 to 378 has biased composition (low complexity); sequence PAGPDQANAAK.

It belongs to the membrane fusion protein (MFP) (TC 8.A.1) family.

It localises to the cell inner membrane. The periplasmic linker protein component of a constitutive organic solvent efflux system. Involved in export of toluene, styrene, m-xylene, propylbenzene and ethylbenzene. Also exports AMP and the antibiotics carbenicillin, nalidixic acid, chloramphenicol and tetracycline. The chain is Toluene efflux pump periplasmic linker protein TtgA (ttgA) from Pseudomonas putida (strain DOT-T1E).